We begin with the raw amino-acid sequence, 368 residues long: Phosphoserine aminotransferase (368 aa).

Arg-44 is a binding site for L-glutamate. Pyridoxal 5'-phosphate-binding positions include 78–79, Trp-104, Thr-157, Asp-179, and Gln-202; that span reads AT. N6-(pyridoxal phosphate)lysine is present on Lys-203. 244 to 245 is a pyridoxal 5'-phosphate binding site; that stretch reads NT.

Belongs to the class-V pyridoxal-phosphate-dependent aminotransferase family. SerC subfamily. In terms of assembly, homodimer. Pyridoxal 5'-phosphate is required as a cofactor.

The protein resides in the cytoplasm. It catalyses the reaction O-phospho-L-serine + 2-oxoglutarate = 3-phosphooxypyruvate + L-glutamate. The enzyme catalyses 4-(phosphooxy)-L-threonine + 2-oxoglutarate = (R)-3-hydroxy-2-oxo-4-phosphooxybutanoate + L-glutamate. Its pathway is amino-acid biosynthesis; L-serine biosynthesis; L-serine from 3-phospho-D-glycerate: step 2/3. It participates in cofactor biosynthesis; pyridoxine 5'-phosphate biosynthesis; pyridoxine 5'-phosphate from D-erythrose 4-phosphate: step 3/5. Functionally, catalyzes the reversible conversion of 3-phosphohydroxypyruvate to phosphoserine and of 3-hydroxy-2-oxo-4-phosphonooxybutanoate to phosphohydroxythreonine. The chain is Phosphoserine aminotransferase from Neisseria meningitidis serogroup B (strain ATCC BAA-335 / MC58).